Consider the following 331-residue polypeptide: MIDTSIPLVDLHRHLDGNVRVNTIWELGHQHGIALPADSLETLAPFVQIQGKETSLVAFLKKLDWMVAVLADLDAVKRVAYENVADAALSGLDYAELRFSPYYMAMNHKLPIEGVVEAVVDGVKAGLKDYNVKINLIGILSRSFGQAACTQELEGLLAHKQHLVAMDLAGDEMGFPGELFNDHFKRVRDADLAITAHAGEAAGSQSMWQAIQELGATRIGHGVNAIHDPKLMEYLAKHRIGIESCPTSNLHTSTVASYAEHPFRTFMDAGVLINLNTDDPGVSAIDINHEYRIAKSELKLTDAELAQVQRNGVEMAFLSDSERKALYAAKV.

2 residues coordinate Zn(2+): His-12 and His-14. Positions 14, 16, and 170 each coordinate substrate. His-197 contributes to the Zn(2+) binding site. Glu-200 acts as the Proton donor in catalysis. Asp-278 provides a ligand contact to Zn(2+). Asp-279 is a binding site for substrate.

Belongs to the metallo-dependent hydrolases superfamily. Adenosine and AMP deaminases family. Adenosine deaminase subfamily. It depends on Zn(2+) as a cofactor.

The catalysed reaction is adenosine + H2O + H(+) = inosine + NH4(+). The enzyme catalyses 2'-deoxyadenosine + H2O + H(+) = 2'-deoxyinosine + NH4(+). In terms of biological role, catalyzes the hydrolytic deamination of adenosine and 2-deoxyadenosine. The chain is Adenosine deaminase from Shewanella baltica (strain OS185).